Reading from the N-terminus, the 442-residue chain is UDP-N-acetylmuramate--L-alanine ligase (442 aa).

109 to 115 (GAHGKTS) is an ATP binding site.

This sequence belongs to the MurCDEF family.

The protein resides in the cytoplasm. It catalyses the reaction UDP-N-acetyl-alpha-D-muramate + L-alanine + ATP = UDP-N-acetyl-alpha-D-muramoyl-L-alanine + ADP + phosphate + H(+). It participates in cell wall biogenesis; peptidoglycan biosynthesis. In terms of biological role, cell wall formation. The chain is UDP-N-acetylmuramate--L-alanine ligase from Streptococcus pyogenes serotype M6 (strain ATCC BAA-946 / MGAS10394).